The primary structure comprises 940 residues: Isoleucine--tRNA ligase (940 aa).

The 'HIGH' region signature appears at 58–68 (PYANGSIHIGH). L-isoleucyl-5'-AMP is bound at residue Glu564. Residues 605 to 609 (KMSKS) carry the 'KMSKS' region motif. Lys608 is an ATP binding site. Zn(2+) is bound by residues Cys903, Cys906, Cys923, and Cys926.

This sequence belongs to the class-I aminoacyl-tRNA synthetase family. IleS type 1 subfamily. Monomer. It depends on Zn(2+) as a cofactor.

It is found in the cytoplasm. The catalysed reaction is tRNA(Ile) + L-isoleucine + ATP = L-isoleucyl-tRNA(Ile) + AMP + diphosphate. Its function is as follows. Catalyzes the attachment of isoleucine to tRNA(Ile). As IleRS can inadvertently accommodate and process structurally similar amino acids such as valine, to avoid such errors it has two additional distinct tRNA(Ile)-dependent editing activities. One activity is designated as 'pretransfer' editing and involves the hydrolysis of activated Val-AMP. The other activity is designated 'posttransfer' editing and involves deacylation of mischarged Val-tRNA(Ile). This chain is Isoleucine--tRNA ligase, found in Shewanella sp. (strain ANA-3).